A 292-amino-acid chain; its full sequence is Glycine--tRNA ligase alpha subunit (292 aa).

This sequence belongs to the class-II aminoacyl-tRNA synthetase family. As to quaternary structure, tetramer of two alpha and two beta subunits.

Its subcellular location is the cytoplasm. It catalyses the reaction tRNA(Gly) + glycine + ATP = glycyl-tRNA(Gly) + AMP + diphosphate. This is Glycine--tRNA ligase alpha subunit from Buchnera aphidicola subsp. Schizaphis graminum (strain Sg).